The primary structure comprises 220 residues: Adenylate kinase (220 aa).

10–15 is an ATP binding site; it reads GAGKGT. An NMP region spans residues 30 to 59; sequence STGDMLRAAVKNCTPLGLKAKEIMDAGGLV. AMP-binding positions include Thr-31, Arg-36, 57-59, 85-88, and Gln-92; these read GLV and GFPR. Residues 126 to 163 are LID; sequence GRRTCPSCGKGFHVLFAPPRKAGVCDFCGADLVQRGDD. Arg-127 serves as a coordination point for ATP. Zn(2+) is bound by residues Cys-130, Cys-133, Cys-150, and Cys-153. The AMP site is built by Arg-160 and Arg-171. Leu-199 is a binding site for ATP.

This sequence belongs to the adenylate kinase family. Monomer.

Its subcellular location is the cytoplasm. The catalysed reaction is AMP + ATP = 2 ADP. The protein operates within purine metabolism; AMP biosynthesis via salvage pathway; AMP from ADP: step 1/1. Functionally, catalyzes the reversible transfer of the terminal phosphate group between ATP and AMP. Plays an important role in cellular energy homeostasis and in adenine nucleotide metabolism. The protein is Adenylate kinase of Pelobacter propionicus (strain DSM 2379 / NBRC 103807 / OttBd1).